A 176-amino-acid chain; its full sequence is Epididymal-specific lipocalin-9 (176 aa).

A signal peptide spans 1 to 15 (MALLLLSLGLSLIAA). Residues asparagine 68 and asparagine 129 are each glycosylated (N-linked (GlcNAc...) asparagine). A disulfide bridge links cysteine 83 with cysteine 161.

It belongs to the calycin superfamily. Lipocalin family.

It localises to the secreted. The protein is Epididymal-specific lipocalin-9 of Homo sapiens (Human).